The sequence spans 57 residues: Large ribosomal subunit protein eL20 (57 aa).

Residues Met-1 to Phe-10 are compositionally biased toward polar residues. A disordered region spans residues Met-1 to Lys-21.

This sequence belongs to the eukaryotic ribosomal protein eL20 family. Part of the 50S ribosomal subunit. Binds 23S rRNA.

The sequence is that of Large ribosomal subunit protein eL20 from Halomicrobium mukohataei (strain ATCC 700874 / DSM 12286 / JCM 9738 / NCIMB 13541) (Haloarcula mukohataei).